A 506-amino-acid polypeptide reads, in one-letter code: Pyruvate kinase 2 (506 aa).

Ser-24 is modified (phosphoserine). A substrate-binding site is contributed by Arg-51. Positions 53, 55, 86, and 87 each coordinate K(+). 53-56 (NFSH) serves as a coordination point for ATP. Residues Arg-93 and Lys-179 each coordinate ATP. Residue Glu-244 coordinates Mg(2+). Residues Gly-267, Asp-268, and Thr-300 each coordinate substrate. Residue Asp-268 coordinates Mg(2+).

It belongs to the pyruvate kinase family. In terms of assembly, homotetramer. Mg(2+) is required as a cofactor. The cofactor is K(+).

The enzyme catalyses pyruvate + ATP = phosphoenolpyruvate + ADP + H(+). The protein operates within carbohydrate degradation; glycolysis; pyruvate from D-glyceraldehyde 3-phosphate: step 5/5. Not activated by fructose-1,6-bisphosphate. Its function is as follows. May be used by cells under conditions in which the level of glycolytic flux is very low. The sequence is that of Pyruvate kinase 2 (PYK2) from Saccharomyces cerevisiae (strain ATCC 204508 / S288c) (Baker's yeast).